The sequence spans 455 residues: Ectonucleoside triphosphate diphosphohydrolase 6 (455 aa).

Topologically, residues 1 to 12 (MRKIPNHGTLRM) are cytoplasmic. The chain crosses the membrane as a helical; Signal-anchor for type II membrane protein span at residues 13–32 (TKVAYPLGLCVGLFIYVAYI). Residues 33 to 455 (KWHRASAAQA…SLKRQKVPAL (423 aa)) lie on the Lumenal side of the membrane. N-linked (GlcNAc...) asparagine glycosylation is present at asparagine 192. Glutamate 196 acts as the Proton acceptor in catalysis. N-linked (GlcNAc...) asparagine glycosylation occurs at asparagine 256. Cystine bridges form between cysteine 297/cysteine 327 and cysteine 387/cysteine 401.

The protein belongs to the GDA1/CD39 NTPase family. The cofactor is Ca(2+). Mg(2+) serves as cofactor. In terms of processing, might be cleaved at the N-terminus, retained in an intracellular membrane compartment and in addition be released into the extracellular medium. N-glycosylated. Expressed in heart and brain.

The protein localises to the golgi apparatus membrane. Its subcellular location is the secreted. It localises to the cell membrane. The enzyme catalyses a ribonucleoside 5'-diphosphate + H2O = a ribonucleoside 5'-phosphate + phosphate + H(+). It catalyses the reaction IDP + H2O = IMP + phosphate + H(+). The catalysed reaction is GDP + H2O = GMP + phosphate + H(+). It carries out the reaction UDP + H2O = UMP + phosphate + H(+). Its function is as follows. Catalyzes the hydrolysis of nucleoside triphosphates and diphosphates in a calcium- or magnesium-dependent manner. Has a strong preference for nucleoside diphosphates, preferentially hydrolyzes GDP, IDP, and UDP, with slower hydrolysis of CDP, ITP, GTP, CTP, ADP, and UTP and virtually no hydrolysis of ATP. The membrane bound form might support glycosylation reactions in the Golgi apparatus and, when released from cells, might catalyze the hydrolysis of extracellular nucleotides. The polypeptide is Ectonucleoside triphosphate diphosphohydrolase 6 (Entpd6) (Rattus norvegicus (Rat)).